Reading from the N-terminus, the 816-residue chain is Subtilisin-like protease SBT2.6 (816 aa).

A signal peptide spans 1 to 19 (MDIGCKVLVFFTCFLTVTA). Residues 20-126 (EIYIVTMEGE…VDRDWKVRKL (107 aa)) constitute a propeptide, activation peptide. Positions 22-124 (YIVTMEGEPI…KSVDRDWKVR (103 aa)) constitute an Inhibitor I9 domain. The region spanning 120–672 (DWKVRKLTTH…SGHVNPSAAL (553 aa)) is the Peptidase S8 domain. Residues Asp-160 and His-235 each act as charge relay system in the active site. The region spanning 418 to 492 (DCQKPEVLNK…SCIPGILITD (75 aa)) is the PA domain. N-linked (GlcNAc...) asparagine glycans are attached at residues Asn-504 and Asn-578. Ser-597 functions as the Charge relay system in the catalytic mechanism. A glycan (N-linked (GlcNAc...) asparagine) is linked at Asn-702.

This sequence belongs to the peptidase S8 family.

It is found in the secreted. The protein is Subtilisin-like protease SBT2.6 of Arabidopsis thaliana (Mouse-ear cress).